A 700-amino-acid polypeptide reads, in one-letter code: ATP-dependent DNA helicase UvrD2 (700 aa).

One can recognise a UvrD-like helicase ATP-binding domain in the interval 10–301; it reads AGLDDQQREA…VRLERDYRST (292 aa). Residues 34 to 39 and Arg299 each bind ATP; that span reads GTGKTR. The region spanning 302 to 553 is the UvrD-like helicase C-terminal domain; sequence PQVVSLANRV…LYVGITRARV (252 aa). Residues 565 to 595 are disordered; that stretch reads PGGRQSRKPSRFLNGIAPQTRADPVPGTSRR. Positions 626–700 constitute an HRDC domain; sequence ADVDEELLLQ…DVLQLVRGRT (75 aa).

The protein belongs to the helicase family. UvrD subfamily. The cofactor is Mg(2+).

It catalyses the reaction Couples ATP hydrolysis with the unwinding of duplex DNA by translocating in the 3'-5' direction.. It carries out the reaction ATP + H2O = ADP + phosphate + H(+). DNA-dependent ATPase, stimulated equally by ss- and dsDNA. Has both ATPase and helicase activities. In Mycobacterium bovis (strain ATCC BAA-935 / AF2122/97), this protein is ATP-dependent DNA helicase UvrD2 (uvrD2).